A 72-amino-acid chain; its full sequence is Small ribosomal subunit protein bS20 (72 aa).

This sequence belongs to the bacterial ribosomal protein bS20 family.

Binds directly to 16S ribosomal RNA. This is Small ribosomal subunit protein bS20 (rpsT) from Proteus mirabilis.